Reading from the N-terminus, the 260-residue chain is Snake venom serine protease gussurobin (260 aa).

Positions 1 to 18 (MVLIRVLANLLILQLSYA) are cleaved as a signal peptide. A propeptide spanning residues 19–24 (QKSSEL) is cleaved from the precursor. One can recognise a Peptidase S1 domain in the interval 25 to 251 (IIGGDECNIN…YTEWIQSTIA (227 aa)). 6 disulfides stabilise this stretch: C31–C165, C52–C68, C100–C258, C144–C212, C176–C191, and C202–C227. Catalysis depends on charge relay system residues H67 and D112. N-linked (GlcNAc...) asparagine glycosylation is found at N123 and N124. S206 functions as the Charge relay system in the catalytic mechanism.

This sequence belongs to the peptidase S1 family. Snake venom subfamily. In terms of assembly, monomer. In terms of tissue distribution, expressed by the venom gland.

Its subcellular location is the secreted. Its function is as follows. Snake venom serine protease that may act in the hemostasis system of the prey. In Gloydius ussuriensis (Ussuri mamushi), this protein is Snake venom serine protease gussurobin.